The sequence spans 106 residues: MNALSGLRMAQESVGLISVAHQAFVTIAGCGVNALSGLQVAQEFVGLISVAHQAFITIAGCGVNALSGLRMAQESVGLISVAHQAFVTIAGCGVNALSGLRMAREL.

This is an uncharacterized protein from Escherichia coli O157:H7.